A 174-amino-acid chain; its full sequence is Large ribosomal subunit protein uL16 (174 aa).

The protein belongs to the universal ribosomal protein uL16 family.

This chain is Large ribosomal subunit protein uL16, found in Methanocaldococcus jannaschii (strain ATCC 43067 / DSM 2661 / JAL-1 / JCM 10045 / NBRC 100440) (Methanococcus jannaschii).